Reading from the N-terminus, the 305-residue chain is Tyrosine recombinase XerD (305 aa).

Residues 1–83 form the Core-binding (CB) domain; sequence MEFISQFLEM…TIKSYYEFLI (83 aa). The Tyr recombinase domain occupies 104-298; the sequence is KLPEILSIDD…QTNHLKKALL (195 aa). Catalysis depends on residues arginine 145, lysine 175, histidine 250, arginine 253, and histidine 276. The active-site O-(3'-phospho-DNA)-tyrosine intermediate is tyrosine 285.

Belongs to the 'phage' integrase family. XerD subfamily. Forms a cyclic heterotetrameric complex composed of two molecules of XerC and two molecules of XerD.

The protein resides in the cytoplasm. Site-specific tyrosine recombinase, which acts by catalyzing the cutting and rejoining of the recombining DNA molecules. The XerC-XerD complex is essential to convert dimers of the bacterial chromosome into monomers to permit their segregation at cell division. It also contributes to the segregational stability of plasmids. The protein is Tyrosine recombinase XerD of Rickettsia bellii (strain RML369-C).